We begin with the raw amino-acid sequence, 303 residues long: 4-diphosphocytidyl-2-C-methyl-D-erythritol kinase (303 aa).

K21 is a catalytic residue. An ATP-binding site is contributed by 106 to 116; that stretch reads PVAAGIGGGSA. The active site involves D148.

The protein belongs to the GHMP kinase family. IspE subfamily.

It carries out the reaction 4-CDP-2-C-methyl-D-erythritol + ATP = 4-CDP-2-C-methyl-D-erythritol 2-phosphate + ADP + H(+). It functions in the pathway isoprenoid biosynthesis; isopentenyl diphosphate biosynthesis via DXP pathway; isopentenyl diphosphate from 1-deoxy-D-xylulose 5-phosphate: step 3/6. Functionally, catalyzes the phosphorylation of the position 2 hydroxy group of 4-diphosphocytidyl-2C-methyl-D-erythritol. In Nitrobacter hamburgensis (strain DSM 10229 / NCIMB 13809 / X14), this protein is 4-diphosphocytidyl-2-C-methyl-D-erythritol kinase.